The following is a 406-amino-acid chain: Probable endo-xylogalacturonan hydrolase A (406 aa).

Residues 1–18 (MTLYRNLLLLASLGLSYA) form the signal peptide. N-linked (GlcNAc...) asparagine glycosylation occurs at Asn-84. PbH1 repeat units follow at residues 183–213 (ATNV…DIGE) and 214–235 (STYV…ALKP). Residue Asp-228 is the Proton donor of the active site. His-251 is an active-site residue. 3 PbH1 repeats span residues 266 to 289 (VKNI…KTYP), 299 to 320 (VSNV…QIQS), and 333 to 375 (PGNA…SISG). N-linked (GlcNAc...) asparagine glycans are attached at residues Asn-278 and Asn-301.

Belongs to the glycosyl hydrolase 28 family.

Its subcellular location is the secreted. Pectinolytic enzyme involved in the degradation of xylogalacturonan (xga), a galacturonan backbone heavily substituted with xylose, and which is one important component of the hairy regions of pectin. Activity requires a galacturonic acid backbone substituted with xylose. The chain is Probable endo-xylogalacturonan hydrolase A (xghA) from Aspergillus niger (strain ATCC MYA-4892 / CBS 513.88 / FGSC A1513).